The following is a 292-amino-acid chain: Homoserine kinase (292 aa).

Position 84–94 (proline 84–alanine 94) interacts with ATP.

The protein belongs to the GHMP kinase family. Homoserine kinase subfamily.

The protein localises to the cytoplasm. The catalysed reaction is L-homoserine + ATP = O-phospho-L-homoserine + ADP + H(+). Its pathway is amino-acid biosynthesis; L-threonine biosynthesis; L-threonine from L-aspartate: step 4/5. Catalyzes the ATP-dependent phosphorylation of L-homoserine to L-homoserine phosphate. The sequence is that of Homoserine kinase from Campylobacter lari (strain RM2100 / D67 / ATCC BAA-1060).